A 72-amino-acid polypeptide reads, in one-letter code: Translation initiation factor IF-1 (72 aa).

The S1-like domain maps to 2 to 72; the sequence is AKEDVIEIQG…TKGRITYRFK (71 aa).

It belongs to the IF-1 family. As to quaternary structure, component of the 30S ribosomal translation pre-initiation complex which assembles on the 30S ribosome in the order IF-2 and IF-3, IF-1 and N-formylmethionyl-tRNA(fMet); mRNA recruitment can occur at any time during PIC assembly.

It is found in the cytoplasm. In terms of biological role, one of the essential components for the initiation of protein synthesis. Stabilizes the binding of IF-2 and IF-3 on the 30S subunit to which N-formylmethionyl-tRNA(fMet) subsequently binds. Helps modulate mRNA selection, yielding the 30S pre-initiation complex (PIC). Upon addition of the 50S ribosomal subunit IF-1, IF-2 and IF-3 are released leaving the mature 70S translation initiation complex. This chain is Translation initiation factor IF-1, found in Lactiplantibacillus plantarum (strain ATCC BAA-793 / NCIMB 8826 / WCFS1) (Lactobacillus plantarum).